The chain runs to 265 residues: MEIRQNVKFKKPLIHYITNPISINDCANMILAAGAKPIMAEHPLEVSEITSASKSLGVNIGNITDNKMKSMLISGKTAYENKIPQVIDLVGVGCSKLRLDYAKKFISECHPNVIKGNMSEIKAIYGIKSSAKGIDVGACDIITEQNFDENIEMIKRLSMETGSVVAATGVVDIISNGTYTYIISNGCEMLSMITGTGCMLTGIIASYISSGNILEGTALAIVLMGICGELSQHVKGTGSFRNELIDNIFSISDDIIIKKIRINSY.

A substrate-binding site is contributed by M39. Positions 115 and 168 each coordinate ATP. G195 is a binding site for substrate.

It belongs to the Thz kinase family. Mg(2+) is required as a cofactor.

It carries out the reaction 5-(2-hydroxyethyl)-4-methylthiazole + ATP = 4-methyl-5-(2-phosphooxyethyl)-thiazole + ADP + H(+). Its pathway is cofactor biosynthesis; thiamine diphosphate biosynthesis; 4-methyl-5-(2-phosphoethyl)-thiazole from 5-(2-hydroxyethyl)-4-methylthiazole: step 1/1. Its function is as follows. Catalyzes the phosphorylation of the hydroxyl group of 4-methyl-5-beta-hydroxyethylthiazole (THZ). The sequence is that of Hydroxyethylthiazole kinase 2 from Clostridium botulinum (strain Langeland / NCTC 10281 / Type F).